Reading from the N-terminus, the 163-residue chain is Probable RNA-binding protein EIF1AD (163 aa).

The S1-like domain maps to 18-96 (MMEDDYELPT…VKAEISKILT (79 aa)). Residues 106–163 (AGIWPERFAKNPPQEAKAQNDDEDSDFEDDLTPNTNRPVQESDEEDEDTDTESSDEED) are disordered. Composition is skewed to acidic residues over residues 126-136 (DDEDSDFEDDL) and 146-163 (ESDE…DEED).

It belongs to the EIF1AD family.

The chain is Probable RNA-binding protein EIF1AD from Drosophila pseudoobscura pseudoobscura (Fruit fly).